The following is a 130-amino-acid chain: Protein lgg-2 (130 aa).

G130 carries the Phosphatidylethanolamine amidated glycine lipid modification.

It belongs to the ATG8 family. May interact with vps-39. Interacts with lgg-3; the interaction is direct. Interacts with atg-16.1 (via WD domain) and atg-16.2 (via WD 5-6 repeats); the interactions are direct. Interacts with sepa-1 (via the LIR motifs); the interaction is direct. Interacts with sqst-1 (via the LIR motifs); the interaction is direct. Interacts with epg-2 (via the LIR motifs); the interaction is weak. Interacts with atg-7; the interaction is direct. Interacts with atg-3. The interaction with atg-7 and atg-3 may be required for the lipidation of lgg-2. In terms of processing, this protein is subject to lipidation. Lipidation is regulated by lgg-1.

It is found in the cytoplasmic vesicle. The protein localises to the autophagosome. It localises to the cytoplasm. Its subcellular location is the cell membrane. Its function is as follows. Ubiquitin-like modifier involved in the formation of autophagosomal vacuoles (autophagosomes). When lipidated mediates tethering between adjacent membranes and stimulates membrane fusion. Less effective at promoting membrane fusion than lgg-1. Acts upstream of the autophagy protein epg-5 in the aggrephagy pathway, which is the macroautophagic degradation of ubiquitinated protein aggregates, and preferentially interacts with autophagy proteins and substrates containing LIR motifs to mediate autophagosome formation and protein aggregate degradation. In particular binds to components of an atg-5-lgg-3-atg-16 complex to regulate autophagosome formation and cargo sequestration. Required for the degradation of specific sqst-1-containing aggregates during embryogenesis and the early stages of larval development. Involved in allophagy, which is an autophagic process in which paternal mitochondria and organelles are degraded during fertilization, and moreover is required for the degradation of lgg-1-positive allophagic autophagosomes in embryos. Involved in xenophagy, the autophagy-mediated degradation of pathogens and pathogen products, such as toxins. Also plays a role in membrane-pore repair. Through HOPS complex subunit vps-39, tethers lysosomes with autophagosomes to form autolysosomes. Plays a role in the distribution and clearance of germ cell specific P-granules from somatic cells to ensure exclusive localization of the P-granules in germ cells. Essential for dauer development and life-span extension. In Caenorhabditis elegans, this protein is Protein lgg-2.